The primary structure comprises 287 residues: Bifunctional protein FolD (287 aa).

NADP(+) contacts are provided by residues 166–168 and Ile-232; that span reads GAS.

Belongs to the tetrahydrofolate dehydrogenase/cyclohydrolase family. In terms of assembly, homodimer.

The catalysed reaction is (6R)-5,10-methylene-5,6,7,8-tetrahydrofolate + NADP(+) = (6R)-5,10-methenyltetrahydrofolate + NADPH. It carries out the reaction (6R)-5,10-methenyltetrahydrofolate + H2O = (6R)-10-formyltetrahydrofolate + H(+). Its pathway is one-carbon metabolism; tetrahydrofolate interconversion. Functionally, catalyzes the oxidation of 5,10-methylenetetrahydrofolate to 5,10-methenyltetrahydrofolate and then the hydrolysis of 5,10-methenyltetrahydrofolate to 10-formyltetrahydrofolate. This chain is Bifunctional protein FolD, found in Aeromonas hydrophila subsp. hydrophila (strain ATCC 7966 / DSM 30187 / BCRC 13018 / CCUG 14551 / JCM 1027 / KCTC 2358 / NCIMB 9240 / NCTC 8049).